Consider the following 99-residue polypeptide: Small ribosomal subunit protein uS19 (99 aa).

A disordered region spans residues 76-99 (PTRSFRGHAGGGKAEKGGSAPRKK).

Belongs to the universal ribosomal protein uS19 family.

Functionally, protein S19 forms a complex with S13 that binds strongly to the 16S ribosomal RNA. In Pelodictyon phaeoclathratiforme (strain DSM 5477 / BU-1), this protein is Small ribosomal subunit protein uS19.